Reading from the N-terminus, the 80-residue chain is MMKLVLLSVIVILFSLIGSIHGANVPGNYPLDSSGNKYPCTVLGDNQSCIDVCKKHGVKYGYCYGFKCWCEYLKDKNVSL.

Residues 1-22 form the signal peptide; that stretch reads MMKLVLLSVIVILFSLIGSIHG. The LCN-type CS-alpha/beta domain maps to 25–80; the sequence is VPGNYPLDSSGNKYPCTVLGDNQSCIDVCKKHGVKYGYCYGFKCWCEYLKDKNVSL. 3 disulfides stabilise this stretch: C40–C63, C49–C68, and C53–C70.

The protein belongs to the long (3 C-C) scorpion toxin superfamily. Sodium/Potassium channel inhibitor family. As to expression, expressed by the venom gland.

The protein resides in the secreted. Functionally, probable neurotoxin that inhibits ion channels. Is toxic to mice. This is Toxin Acra I-3 from Androctonus crassicauda (Arabian fat-tailed scorpion).